The primary structure comprises 329 residues: Protein phosphatase 1 regulatory subunit 42 (329 aa).

LRR repeat units lie at residues Lys-30–Arg-51, Asn-52–Ser-73, Asn-74–His-95, Lys-96–Lys-117, Ser-118–Pro-139, Thr-148–Arg-169, and Lys-170–Phe-191. An LRRCT domain is found at Asn-205–Trp-243. The segment at Ser-268–Ile-329 is disordered. Residues Gly-318–Ile-329 show a composition bias toward polar residues.

The protein localises to the cytoplasm. It localises to the cytoskeleton. The protein resides in the microtubule organizing center. It is found in the centrosome. Its function is as follows. May regulate phosphatase activity of protein phosphatase 1 (PP1) complexes. This is Protein phosphatase 1 regulatory subunit 42 (ppp1r42) from Danio rerio (Zebrafish).